A 366-amino-acid chain; its full sequence is Transcription initiation factor IIA subunit 1 (366 aa).

Disordered stretches follow at residues Leu56–Ala82, Glu133–Gln162, and Gln257–Glu317. Residues Ser146–Gln162 show a composition bias toward low complexity. The span at Ser264–Glu317 shows a compositional bias: acidic residues. Phosphoserine; by TAF1 occurs at positions 265 and 306.

This sequence belongs to the TFIIA subunit 1 family. As to quaternary structure, belongs to the TFIID complex which is composed of TATA binding protein (Tbp) and a number of TBP-associated factors (Tafs). TFIIA is a heterodimer of a unprocessed large subunit 1 and a small subunit gamma. It was originally believed to be a heterotrimer of an alpha (p30), a beta (p20) and a gamma subunit (p14). Interacts with Tbp. Taf4 interacts with TFIIA-L when TFIIA-L is in complex with Tbp. The precursor form (48 kDa) is cleaved to give rise to the alpha (30 kDa) and beta (20 kDa) subunits.

The protein resides in the nucleus. TFIIA is a component of the transcription machinery of RNA polymerase II and plays an important role in transcriptional activation. TFIIA in a complex with TBP mediates transcriptional activity. In Drosophila melanogaster (Fruit fly), this protein is Transcription initiation factor IIA subunit 1 (TfIIA-L).